A 251-amino-acid chain; its full sequence is 3-deoxy-manno-octulosonate cytidylyltransferase (251 aa).

It belongs to the KdsB family.

The protein localises to the cytoplasm. It carries out the reaction 3-deoxy-alpha-D-manno-oct-2-ulosonate + CTP = CMP-3-deoxy-beta-D-manno-octulosonate + diphosphate. Its pathway is nucleotide-sugar biosynthesis; CMP-3-deoxy-D-manno-octulosonate biosynthesis; CMP-3-deoxy-D-manno-octulosonate from 3-deoxy-D-manno-octulosonate and CTP: step 1/1. It functions in the pathway bacterial outer membrane biogenesis; lipopolysaccharide biosynthesis. Activates KDO (a required 8-carbon sugar) for incorporation into bacterial lipopolysaccharide in Gram-negative bacteria. This chain is 3-deoxy-manno-octulosonate cytidylyltransferase, found in Agrobacterium fabrum (strain C58 / ATCC 33970) (Agrobacterium tumefaciens (strain C58)).